The sequence spans 353 residues: DNA-repair protein XRCC1 (353 aa).

The span at 1 to 12 shows a compositional bias: polar residues; that stretch reads MSQKRNLPSWMS. The disordered stretch occupies residues 1–57; the sequence is MSQKRNLPSWMSSRDPEITPSKSHCKKPKDEGPTEEHNSRNAPSNKSEHAEPSSNTT. Residues 28–39 are compositionally biased toward basic and acidic residues; it reads PKDEGPTEEHNS. One can recognise a BRCT 1 domain in the interval 58–146; that stretch reads EFSKLMEGVV…KLVDIEQYLM (89 aa). The interval 150-194 is disordered; it reads KPWRKSSSPQDANREKREHLSKKPEKQVEKKTETRGTPSTSSKNR. Basic and acidic residues predominate over residues 161 to 183; that stretch reads ANREKREHLSKKPEKQVEKKTET. The span at 184–194 shows a compositional bias: polar residues; it reads RGTPSTSSKNR. The stretch at 240 to 260 forms a coiled coil; it reads AAEGVLTCLQDAIDSLEQKQD. The BRCT 2 domain maps to 266–347; that stretch reads ELWSFVPRVV…EEEIELAYRN (82 aa).

As to quaternary structure, homodimer. Interacts with polynucleotide kinase (PNK), DNA polymerase-beta (POLB) and DNA ligase III (LIG3). Interacts with ZDP and ROS1. Binds to various forms of double-stranded DNA (e.g. methylated, unmethylated, with single-nucleotide gap flanked by 3'-phosphate or 5'-phosphate ends).

The protein resides in the nucleus. Its function is as follows. Corrects defective DNA strand-break repair and sister chromatid exchange following treatment with ionizing radiation and alkylating agents. Involved in DNA demethylation pathway by stimulating cytosine methylation (5-meC) excision, gap tailoring, and DNA ligation. The sequence is that of DNA-repair protein XRCC1 from Arabidopsis thaliana (Mouse-ear cress).